An 831-amino-acid polypeptide reads, in one-letter code: Cadherin-related family member 5 (831 aa).

The signal sequence occupies residues 1–28 (MGAPALLWPSLLLPWLTVLFGQPPGTLA). The Extracellular portion of the chain corresponds to 29–641 (QTQVCSVNQT…GQRFSTVDMA (613 aa)). Residues asparagine 36, asparagine 45, asparagine 84, asparagine 135, asparagine 143, asparagine 173, asparagine 201, asparagine 287, asparagine 311, asparagine 408, and asparagine 475 are each glycosylated (N-linked (GlcNAc...) asparagine). Cadherin domains are found at residues 53–125 (VNIF…DNAP), 128–240 (SFEI…TPWF), 252–357 (IHAQ…PLQF), and 358–459 (SQSL…ERER). Positions 452 to 632 (IQVSERERTP…STGAGEQGDG (181 aa)) are disordered. Positions 473–491 (SSNTTMEAPLTSGTSQRPA) are enriched in polar residues. The span at 505 to 540 (GGTTLRPPTPASSIPGGSPTLGTSTSPQTTTPGGDS) shows a compositional bias: low complexity. Positions 541–554 (AQTPKPGTSHPTAP) are enriched in polar residues. 2 repeat units span residues 541–571 (AQTP…RSDS) and 572–602 (TQTP…SGSS). The tract at residues 541 to 614 (AQTPKPGTSH…TPKPGTSQST (74 aa)) is 3 X 31 AA approximate tandem repeats. Residues 555 to 572 (TSRTSTSLMTTSSRSDST) show a composition bias toward low complexity. Composition is skewed to polar residues over residues 573–582 (QTPKPGTSQP) and 589–623 (ASTS…SLPS). The stretch at 605 to 614 (TPKPGTSQST) is one 3; truncated repeat. A helical transmembrane segment spans residues 642–662 (VLGGVLGALLLLALICLVILV). The Cytoplasmic portion of the chain corresponds to 663-831 (HKHYRHRLAC…FGVDADNTYI (169 aa)). Positions 663 to 831 (HKHYRHRLAC…FGVDADNTYI (169 aa)) are mediates interaction with USH1C and MYO7B and is required for proper localization to microvilli tips and function in microvilli organization. 2 disordered regions span residues 675–774 (GKAS…GGYK) and 793–831 (EPTA…NTYI). Residues serine 699, serine 721, and serine 725 each carry the phosphoserine modification. Residues 716–738 (PLRPPSPMSSSPTPPSSTPPSPQ) are compositionally biased toward pro residues. Threonine 728 is modified (phosphothreonine). Residues serine 736 and serine 753 each carry the phosphoserine modification. Positions 761–771 (LTKERRPEGEG) are enriched in basic and acidic residues. Threonine 795 carries the post-translational modification Phosphothreonine. A compositionally biased stretch (low complexity) spans 797–807 (DVDSASASGSE). Residues serine 802, serine 804, and serine 806 each carry the phosphoserine modification.

In terms of assembly, part of the IMAC/intermicrovillar adhesion complex/intermicrovillar tip-link complex composed of ANKS4B, MYO7B, USH1C, CDHR2 and CDHR5. Interacts (via cytoplasmic domain) with USH1C and MYO7B; required for proper localization of CDHR5 to microvilli tips and its function in brush border differentiation. Post-translationally, N- and O-glycosylated.

It is found in the apical cell membrane. The protein localises to the cell projection. It localises to the microvillus membrane. In terms of biological role, intermicrovillar adhesion molecule that forms, via its extracellular domain, calcium-dependent heterophilic complexes with CDHR2 on adjacent microvilli. Thereby, controls the packing of microvilli at the apical membrane of epithelial cells. Through its cytoplasmic domain, interacts with microvillus cytoplasmic proteins to form the intermicrovillar adhesion complex/IMAC. This complex plays a central role in microvilli and epithelial brush border differentiation. This Mus musculus (Mouse) protein is Cadherin-related family member 5.